Here is a 261-residue protein sequence, read N- to C-terminus: 5'-nucleotidase SurE (261 aa).

Positions 8, 9, 40, and 94 each coordinate a divalent metal cation.

It belongs to the SurE nucleotidase family. A divalent metal cation serves as cofactor.

It localises to the cytoplasm. It catalyses the reaction a ribonucleoside 5'-phosphate + H2O = a ribonucleoside + phosphate. Its function is as follows. Nucleotidase that shows phosphatase activity on nucleoside 5'-monophosphates. In Anaplasma marginale (strain St. Maries), this protein is 5'-nucleotidase SurE.